Reading from the N-terminus, the 482-residue chain is Membrane-bound lytic murein transglycosylase F (482 aa).

A signal peptide spans 1–13; sequence MKGLFLRIITALA. Positions 14–267 are non-LT domain; it reads LLFWAIDMVF…NLKEKYLGHI (254 aa). Residues 268 to 482 are LT domain; it reads SQFDYVDTRS…NLEEIKENKD (215 aa). Glu312 is an active-site residue.

The protein in the N-terminal section; belongs to the bacterial solute-binding protein 3 family. In the C-terminal section; belongs to the transglycosylase Slt family.

The protein resides in the cell outer membrane. The enzyme catalyses Exolytic cleavage of the (1-&gt;4)-beta-glycosidic linkage between N-acetylmuramic acid (MurNAc) and N-acetylglucosamine (GlcNAc) residues in peptidoglycan, from either the reducing or the non-reducing ends of the peptidoglycan chains, with concomitant formation of a 1,6-anhydrobond in the MurNAc residue.. Its function is as follows. Murein-degrading enzyme that degrades murein glycan strands and insoluble, high-molecular weight murein sacculi, with the concomitant formation of a 1,6-anhydromuramoyl product. Lytic transglycosylases (LTs) play an integral role in the metabolism of the peptidoglycan (PG) sacculus. Their lytic action creates space within the PG sacculus to allow for its expansion as well as for the insertion of various structures such as secretion systems and flagella. In Haemophilus influenzae (strain PittEE), this protein is Membrane-bound lytic murein transglycosylase F.